A 514-amino-acid polypeptide reads, in one-letter code: Pantetheinase (514 aa).

The N-terminal stretch at methionine 1–serine 22 is a signal peptide. N-linked (GlcNAc...) asparagine glycosylation is present at asparagine 39. The CN hydrolase domain maps to alanine 40–serine 307. Glutamate 80 acts as the Proton acceptor in catalysis. Asparagine 87 and asparagine 147 each carry an N-linked (GlcNAc...) asparagine glycan. Lysine 179 serves as the catalytic Proton donor. The active-site Nucleophile is the cysteine 212. 2 N-linked (GlcNAc...) asparagine glycosylation sites follow: asparagine 316 and asparagine 354. Residue aspartate 492 is the site of GPI-anchor amidated aspartate attachment. The propeptide at proline 493–tryptophan 514 is removed in mature form.

This sequence belongs to the carbon-nitrogen hydrolase superfamily. BTD/VNN family. In terms of assembly, monomer.

It localises to the cell membrane. It carries out the reaction (R)-pantetheine + H2O = cysteamine + (R)-pantothenate. Amidohydrolase that hydrolyzes specifically one of the carboamide linkages in D-pantetheine thus recycling pantothenic acid (vitamin B5) and releasing cysteamine. This Canis lupus familiaris (Dog) protein is Pantetheinase (VNN1).